We begin with the raw amino-acid sequence, 428 residues long: Flotillin-2 (428 aa).

3 S-palmitoyl cysteine lipidation sites follow: C4, C19, and C20.

Belongs to the band 7/mec-2 family. Flotillin subfamily. Heterooligomeric complex of flotillins 1 and 2. In terms of processing, palmitoylation may be required for the formation of higher order complexes and for neurite outgrowth in cultured neural stem cells. In terms of tissue distribution, normally expressed in growing retinal exons of newly differentiated ganglion cells at the retinal margin. After optic nerve injury, expressed in all retinal ganglion cells and retinal axons. Also expressed in endothelial cells, spinal cord, larval and adult skin, muscle processes, thymus and gill macrophages.

It localises to the membrane. Its subcellular location is the endosome. Functionally, may play a role in axon growth and regeneration. May be involved in epidermal cell adhesion and epidermal structure and function. The chain is Flotillin-2 (flot2) from Carassius auratus (Goldfish).